We begin with the raw amino-acid sequence, 201 residues long: Glutathione peroxidase 1 (201 aa).

Ser32 carries the post-translational modification Phosphoserine. Residue Sec47 is part of the active site. Sec47 is a non-standard amino acid (selenocysteine). 2 positions are modified to N6-acetyllysine; alternate: Lys86 and Lys112. 2 positions are modified to N6-succinyllysine; alternate: Lys86 and Lys112. Lys119 is modified (N6-acetyllysine). Lys146 is modified (N6-acetyllysine; alternate). Position 146 is an N6-succinyllysine; alternate (Lys146). Phosphoserine occurs at positions 195 and 199.

It belongs to the glutathione peroxidase family. In terms of assembly, homotetramer. Interacts with MIEN1. Post-translationally, during periods of oxidative stress, Sec-47 may react with a superoxide radical, irreversibly lose hydroselenide and be converted to dehydroalanine. As to expression, expressed in liver and lung.

The protein resides in the cytoplasm. It is found in the mitochondrion. It carries out the reaction 2 glutathione + H2O2 = glutathione disulfide + 2 H2O. It catalyses the reaction a hydroperoxy polyunsaturated fatty acid + 2 glutathione = a hydroxy polyunsaturated fatty acid + glutathione disulfide + H2O. The enzyme catalyses tert-butyl hydroperoxide + 2 glutathione = tert-butanol + glutathione disulfide + H2O. The catalysed reaction is cumene hydroperoxide + 2 glutathione = 2-phenylpropan-2-ol + glutathione disulfide + H2O. It carries out the reaction (13S)-hydroperoxy-(9Z,11E)-octadecadienoate + 2 glutathione = (13S)-hydroxy-(9Z,11E)-octadecadienoate + glutathione disulfide + H2O. It catalyses the reaction (9S)-hydroperoxy-(10E,12Z)-octadecadienoate + 2 glutathione = (9S)-hydroxy-(10E,12Z)-octadecadienoate + glutathione disulfide + H2O. The enzyme catalyses (5S)-hydroperoxy-(6E,8Z,11Z,14Z)-eicosatetraenoate + 2 glutathione = (5S)-hydroxy-(6E,8Z,11Z,14Z)-eicosatetraenoate + glutathione disulfide + H2O. The catalysed reaction is (12S)-hydroperoxy-(5Z,8Z,10E,14Z)-eicosatetraenoate + 2 glutathione = (12S)-hydroxy-(5Z,8Z,10E,14Z)-eicosatetraenoate + glutathione disulfide + H2O. It carries out the reaction (12R)-hydroperoxy-(5Z,8Z,10E,14Z)-eicosatetraenoate + 2 glutathione = (12R)-hydroxy-(5Z,8Z,10E,14Z)-eicosatetraenoate + glutathione disulfide + H2O. It catalyses the reaction (15S)-hydroperoxy-(5Z,8Z,11Z,13E)-eicosatetraenoate + 2 glutathione = (15S)-hydroxy-(5Z,8Z,11Z,13E)-eicosatetraenoate + glutathione disulfide + H2O. The enzyme catalyses (5S)-hydroperoxy-(6E,8Z,11Z,14Z,17Z)-eicosapentaenoate + 2 glutathione = (5S)-hydroxy-(6E,8Z,11Z,14Z,17Z)-eicosapentaenoate + glutathione disulfide + H2O. The catalysed reaction is (12S)-hydroperoxy-(5Z,8Z,10E,14Z,17Z)-eicosapentaenoate + 2 glutathione = (12S)-hydroxy-(5Z,8Z,10E,14Z,17Z)-eicosapentaenoate + glutathione disulfide + H2O. It carries out the reaction (15S)-hydroperoxy-(5Z,8Z,11Z,13E,17Z)-eicosapentaenoate + 2 glutathione = (15S)-hydroxy-(5Z,8Z,11Z,13E,17Z)-eicosapentaenoate + glutathione disulfide + H2O. It catalyses the reaction (15S)-hydroperoxy-(11Z,13E)-eicosadienoate + 2 glutathione = (15S)-hydroxy-(11Z,13E)-eicosadienoate + glutathione disulfide + H2O. The enzyme catalyses (17S)-hydroperoxy-(4Z,7Z,10Z,13Z,15E,19Z)-docosahexaenoate + 2 glutathione = (17S)-hydroxy-(4Z,7Z,10Z,13Z,15E,19Z)-docosahexaenoate + glutathione disulfide + H2O. In terms of biological role, catalyzes the reduction of hydroperoxides in a glutathione-dependent manner thus regulating cellular redox homeostasis. Can reduce small soluble hydroperoxides such as H2O2, cumene hydroperoxide and tert-butyl hydroperoxide, as well as several fatty acid-derived hydroperoxides. In platelets catalyzes the reduction of 12-hydroperoxyeicosatetraenoic acid, the primary product of the arachidonate 12-lipoxygenase pathway. This chain is Glutathione peroxidase 1, found in Rattus norvegicus (Rat).